The sequence spans 339 residues: Homocysteine S-methyltransferase 2 (339 aa).

Residues alanine 12–leucine 326 form the Hcy-binding domain. Positions 244, 311, and 312 each coordinate Zn(2+).

As to quaternary structure, monomer. The cofactor is Zn(2+).

The catalysed reaction is S-methyl-L-methionine + L-homocysteine = 2 L-methionine + H(+). Catalyzes methyl transfer from S-methylmethionine (SMM) to adenosyl-L-homocysteine (AdoMet). SMM degradation (by HMT-1, HMT-2, HMT-3 and HMT-4) and biosynthesis (by MMT1) constitute the SMM cycle in plants, which is probably required to achieve short term control of AdoMet level. The sequence is that of Homocysteine S-methyltransferase 2 (HMT-2) from Zea mays (Maize).